The chain runs to 284 residues: 2-dehydro-3-deoxyphosphooctonate aldolase (284 aa).

Belongs to the KdsA family.

The protein localises to the cytoplasm. The enzyme catalyses D-arabinose 5-phosphate + phosphoenolpyruvate + H2O = 3-deoxy-alpha-D-manno-2-octulosonate-8-phosphate + phosphate. The protein operates within carbohydrate biosynthesis; 3-deoxy-D-manno-octulosonate biosynthesis; 3-deoxy-D-manno-octulosonate from D-ribulose 5-phosphate: step 2/3. It functions in the pathway bacterial outer membrane biogenesis; lipopolysaccharide biosynthesis. The polypeptide is 2-dehydro-3-deoxyphosphooctonate aldolase (Histophilus somni (strain 2336) (Haemophilus somnus)).